The following is a 359-amino-acid chain: UDP-N-acetylglucosamine--N-acetylmuramyl-(pentapeptide) pyrophosphoryl-undecaprenol N-acetylglucosamine transferase (359 aa).

UDP-N-acetyl-alpha-D-glucosamine is bound by residues 12–14 (TGG), Asn124, Arg163, Ser191, Ile245, 264–269 (ALTVAE), and Gln290.

The protein belongs to the glycosyltransferase 28 family. MurG subfamily.

The protein localises to the cell inner membrane. It catalyses the reaction di-trans,octa-cis-undecaprenyl diphospho-N-acetyl-alpha-D-muramoyl-L-alanyl-D-glutamyl-meso-2,6-diaminopimeloyl-D-alanyl-D-alanine + UDP-N-acetyl-alpha-D-glucosamine = di-trans,octa-cis-undecaprenyl diphospho-[N-acetyl-alpha-D-glucosaminyl-(1-&gt;4)]-N-acetyl-alpha-D-muramoyl-L-alanyl-D-glutamyl-meso-2,6-diaminopimeloyl-D-alanyl-D-alanine + UDP + H(+). It participates in cell wall biogenesis; peptidoglycan biosynthesis. Functionally, cell wall formation. Catalyzes the transfer of a GlcNAc subunit on undecaprenyl-pyrophosphoryl-MurNAc-pentapeptide (lipid intermediate I) to form undecaprenyl-pyrophosphoryl-MurNAc-(pentapeptide)GlcNAc (lipid intermediate II). This Nitrosococcus oceani (strain ATCC 19707 / BCRC 17464 / JCM 30415 / NCIMB 11848 / C-107) protein is UDP-N-acetylglucosamine--N-acetylmuramyl-(pentapeptide) pyrophosphoryl-undecaprenol N-acetylglucosamine transferase.